The following is a 488-amino-acid chain: Beta-xylosidase (488 aa).

Glu-163 (proton donor) is an active-site residue. The active-site Nucleophile is Glu-275.

Belongs to the glycosyl hydrolase 39 family.

The catalysed reaction is Hydrolysis of (1-&gt;4)-beta-D-xylans, to remove successive D-xylose residues from the non-reducing termini.. Functionally, beta-xylosidase is an intracellular xylan-degrading enzyme. The sequence is that of Beta-xylosidase (xynB) from Caldicellulosiruptor saccharolyticus (Caldocellum saccharolyticum).